The following is a 233-amino-acid chain: Enolase-phosphatase E1 (233 aa).

Residues Asp-16 and Glu-18 each coordinate Mg(2+). Substrate is bound by residues 131–132 and Lys-167; that span reads SS. Asp-193 contacts Mg(2+).

This sequence belongs to the HAD-like hydrolase superfamily. MasA/MtnC family. Monomer. It depends on Mg(2+) as a cofactor.

It localises to the cytoplasm. It is found in the nucleus. The enzyme catalyses 5-methylsulfanyl-2,3-dioxopentyl phosphate + H2O = 1,2-dihydroxy-5-(methylsulfanyl)pent-1-en-3-one + phosphate. It functions in the pathway amino-acid biosynthesis; L-methionine biosynthesis via salvage pathway; L-methionine from S-methyl-5-thio-alpha-D-ribose 1-phosphate: step 3/6. It participates in amino-acid biosynthesis; L-methionine biosynthesis via salvage pathway; L-methionine from S-methyl-5-thio-alpha-D-ribose 1-phosphate: step 4/6. In terms of biological role, bifunctional enzyme that catalyzes the enolization of 2,3-diketo-5-methylthiopentyl-1-phosphate (DK-MTP-1-P) into the intermediate 2-hydroxy-3-keto-5-methylthiopentenyl-1-phosphate (HK-MTPenyl-1-P), which is then dephosphorylated to form the acireductone 1,2-dihydroxy-3-keto-5-methylthiopentene (DHK-MTPene). In Meyerozyma guilliermondii (strain ATCC 6260 / CBS 566 / DSM 6381 / JCM 1539 / NBRC 10279 / NRRL Y-324) (Yeast), this protein is Enolase-phosphatase E1.